A 197-amino-acid chain; its full sequence is Phosphoheptose isomerase (197 aa).

In terms of domain architecture, SIS spans 34-196 (MVQCLLGGNK…DRTLFPQDDQ (163 aa)). 49–51 (NGG) provides a ligand contact to substrate. Zn(2+) is bound by residues His-58 and Glu-62. Substrate is bound by residues Glu-62, 91–92 (ND), 117–119 (STS), Ser-122, and Gln-172. Zn(2+)-binding residues include Gln-172 and His-180.

Belongs to the SIS family. GmhA subfamily. In terms of assembly, homotetramer. Requires Zn(2+) as cofactor.

It is found in the cytoplasm. It carries out the reaction 2 D-sedoheptulose 7-phosphate = D-glycero-alpha-D-manno-heptose 7-phosphate + D-glycero-beta-D-manno-heptose 7-phosphate. It participates in carbohydrate biosynthesis; D-glycero-D-manno-heptose 7-phosphate biosynthesis; D-glycero-alpha-D-manno-heptose 7-phosphate and D-glycero-beta-D-manno-heptose 7-phosphate from sedoheptulose 7-phosphate: step 1/1. Its function is as follows. Catalyzes the isomerization of sedoheptulose 7-phosphate in D-glycero-D-manno-heptose 7-phosphate. The chain is Phosphoheptose isomerase from Shewanella loihica (strain ATCC BAA-1088 / PV-4).